Reading from the N-terminus, the 459-residue chain is Methylenetetrahydrofolate--tRNA-(uracil-5-)-methyltransferase TrmFO (459 aa).

An FAD-binding site is contributed by 11–16 (GAGLAG).

This sequence belongs to the MnmG family. TrmFO subfamily. Requires FAD as cofactor.

The protein localises to the cytoplasm. It catalyses the reaction uridine(54) in tRNA + (6R)-5,10-methylene-5,6,7,8-tetrahydrofolate + NADH + H(+) = 5-methyluridine(54) in tRNA + (6S)-5,6,7,8-tetrahydrofolate + NAD(+). The catalysed reaction is uridine(54) in tRNA + (6R)-5,10-methylene-5,6,7,8-tetrahydrofolate + NADPH + H(+) = 5-methyluridine(54) in tRNA + (6S)-5,6,7,8-tetrahydrofolate + NADP(+). Catalyzes the folate-dependent formation of 5-methyl-uridine at position 54 (M-5-U54) in all tRNAs. This is Methylenetetrahydrofolate--tRNA-(uracil-5-)-methyltransferase TrmFO from Synechococcus sp. (strain CC9311).